The chain runs to 412 residues: Imidazolonepropionase (412 aa).

His-71 and His-73 together coordinate Fe(3+). His-71 and His-73 together coordinate Zn(2+). 4-imidazolone-5-propanoate-binding residues include Arg-80, Tyr-143, and His-176. Tyr-143 lines the N-formimidoyl-L-glutamate pocket. His-241 contributes to the Fe(3+) binding site. His-241 provides a ligand contact to Zn(2+). A 4-imidazolone-5-propanoate-binding site is contributed by Gln-244. Asp-316 lines the Fe(3+) pocket. Asp-316 is a binding site for Zn(2+). N-formimidoyl-L-glutamate is bound by residues Asn-318 and Gly-320. Thr-321 contacts 4-imidazolone-5-propanoate.

Belongs to the metallo-dependent hydrolases superfamily. HutI family. It depends on Zn(2+) as a cofactor. Requires Fe(3+) as cofactor.

The protein resides in the cytoplasm. It carries out the reaction 4-imidazolone-5-propanoate + H2O = N-formimidoyl-L-glutamate. Its pathway is amino-acid degradation; L-histidine degradation into L-glutamate; N-formimidoyl-L-glutamate from L-histidine: step 3/3. Its function is as follows. Catalyzes the hydrolytic cleavage of the carbon-nitrogen bond in imidazolone-5-propanoate to yield N-formimidoyl-L-glutamate. It is the third step in the universal histidine degradation pathway. The polypeptide is Imidazolonepropionase (Aromatoleum aromaticum (strain DSM 19018 / LMG 30748 / EbN1) (Azoarcus sp. (strain EbN1))).